A 371-amino-acid polypeptide reads, in one-letter code: Protein-glutamate methylesterase/protein-glutamine glutaminase 3 (371 aa).

Residues 5-120 (RVVVIDDSAY…SEEILTIRED (116 aa)) form the Response regulatory domain. A 4-aspartylphosphate modification is found at Asp-56. The CheB-type methylesterase domain occupies 174 to 362 (PAGRLEVVAI…LDRMSREIIQ (189 aa)). Active-site residues include Ser-186, His-213, and Asp-309.

Belongs to the CheB family. Post-translationally, phosphorylated by CheA. Phosphorylation of the N-terminal regulatory domain activates the methylesterase activity.

It localises to the cytoplasm. It catalyses the reaction [protein]-L-glutamate 5-O-methyl ester + H2O = L-glutamyl-[protein] + methanol + H(+). The enzyme catalyses L-glutaminyl-[protein] + H2O = L-glutamyl-[protein] + NH4(+). Its function is as follows. Involved in chemotaxis. Part of a chemotaxis signal transduction system that modulates chemotaxis in response to various stimuli. Catalyzes the demethylation of specific methylglutamate residues introduced into the chemoreceptors (methyl-accepting chemotaxis proteins or MCP) by CheR. Also mediates the irreversible deamidation of specific glutamine residues to glutamic acid. This is Protein-glutamate methylesterase/protein-glutamine glutaminase 3 from Geobacter sulfurreducens (strain ATCC 51573 / DSM 12127 / PCA).